Reading from the N-terminus, the 220-residue chain is Protein-L-isoaspartate O-methyltransferase (220 aa).

Ser-64 is a catalytic residue.

It belongs to the methyltransferase superfamily. L-isoaspartyl/D-aspartyl protein methyltransferase family.

It is found in the cytoplasm. The enzyme catalyses [protein]-L-isoaspartate + S-adenosyl-L-methionine = [protein]-L-isoaspartate alpha-methyl ester + S-adenosyl-L-homocysteine. Its function is as follows. Catalyzes the methyl esterification of L-isoaspartyl residues in peptides and proteins that result from spontaneous decomposition of normal L-aspartyl and L-asparaginyl residues. It plays a role in the repair and/or degradation of damaged proteins. This is Protein-L-isoaspartate O-methyltransferase from Methanoculleus marisnigri (strain ATCC 35101 / DSM 1498 / JR1).